The sequence spans 318 residues: Transaldolase (318 aa).

Lys-132 acts as the Schiff-base intermediate with substrate in catalysis.

It belongs to the transaldolase family. Type 1 subfamily. As to quaternary structure, homodimer.

Its subcellular location is the cytoplasm. It carries out the reaction D-sedoheptulose 7-phosphate + D-glyceraldehyde 3-phosphate = D-erythrose 4-phosphate + beta-D-fructose 6-phosphate. It participates in carbohydrate degradation; pentose phosphate pathway; D-glyceraldehyde 3-phosphate and beta-D-fructose 6-phosphate from D-ribose 5-phosphate and D-xylulose 5-phosphate (non-oxidative stage): step 2/3. Functionally, transaldolase is important for the balance of metabolites in the pentose-phosphate pathway. The sequence is that of Transaldolase from Shewanella loihica (strain ATCC BAA-1088 / PV-4).